Here is a 507-residue protein sequence, read N- to C-terminus: Inositol-3-phosphate synthase (507 aa).

NAD(+)-binding residues include Gly-70, Gly-71, Asn-72, Asn-73, Asp-143, Ile-180, Gln-190, Arg-193, Thr-230, Ala-231, Asn-232, Thr-233, Gly-281, Ser-282, Asp-306, Ser-309, Asn-340, Asn-341, Asp-342, Lys-355, Ala-391, Asp-419, and Ser-420.

It belongs to the myo-inositol 1-phosphate synthase family. It depends on NAD(+) as a cofactor.

The protein resides in the cytoplasm. It is found in the cytosol. It localises to the nucleus. It catalyses the reaction D-glucose 6-phosphate = 1D-myo-inositol 3-phosphate. Its pathway is polyol metabolism; myo-inositol biosynthesis; myo-inositol from D-glucose 6-phosphate: step 1/2. Key enzyme in myo-inositol biosynthesis pathway that catalyzes the conversion of glucose 6-phosphate to 1-myo-inositol 1-phosphate in a NAD-dependent manner. This is Inositol-3-phosphate synthase from Citrus paradisi (Grapefruit).